The following is a 207-amino-acid chain: Chloramphenicol acetyltransferase (207 aa).

The active-site Proton acceptor is the His186.

The protein belongs to the chloramphenicol acetyltransferase family. As to quaternary structure, homotrimer.

It carries out the reaction chloramphenicol + acetyl-CoA = chloramphenicol 3-acetate + CoA. Its function is as follows. This enzyme is an effector of chloramphenicol resistance in bacteria. The polypeptide is Chloramphenicol acetyltransferase (Campylobacter coli).